The sequence spans 277 residues: Ras suppressor protein 1 (277 aa).

The disordered stretch occupies residues 1–23 (MSKSLKKLVEESREKNQPEVDMS). Ser2 carries the N-acetylserine modification. The segment covering 7 to 23 (KLVEESREKNQPEVDMS) has biased composition (basic and acidic residues). LRR repeat units follow at residues 41-63 (HITQ…AELK), 64-85 (NLEV…ISSL), 87-109 (KLKH…GSLP), 110-133 (ALEV…FFYL), 135-156 (TLRA…IGKL), 158-179 (KLQI…IGEL), and 181-202 (QLKE…LGNL). Positions 250–277 (MQANPEPPKKNNDKSKKISRKPLAAKNK) are disordered. The span at 256 to 265 (PPKKNNDKSK) shows a compositional bias: basic and acidic residues.

Potentially plays a role in the Ras signal transduction pathway. Capable of suppressing v-Ras transformation in vitro. This chain is Ras suppressor protein 1 (RSU1), found in Bos taurus (Bovine).